The following is a 94-amino-acid chain: Non-specific lipid-transfer protein C4 (94 aa).

An N-terminal signal peptide occupies residues 1–26 (MAASKGNAAAAACALVLVLLAVGAEA). 4 disulfides stabilise this stretch: Cys34–Cys72, Cys44–Cys59, Cys60–Cys85, and Cys70–Cys92. Residue Asn91 is glycosylated (N-linked (GlcNAc...) asparagine).

This sequence belongs to the plant LTP family.

Lipid-transfer protein that may be regulated by the transcription factor UDT1 in developing anthers and play a role in tapetum development. The chain is Non-specific lipid-transfer protein C4 from Oryza sativa subsp. japonica (Rice).